The sequence spans 333 residues: MKSILEQLSSITVVVADTGDLDAIKKFQPRDATTNPSLILAAAKNPDYIKLIDQALESSRKSLPAGFSESELIKETIDQVSVFFGKEILNLISGRVSTEVDARLSFDTEATVTKARKLINHYKSFGINKERILIKIASTWEGIKAAEILEKEGIKCNLTLLFNFCQAVACANAKITLISPFVGRILDWHKAKTGKDNFAGCEDPGVISVTKIYNYFKEKGFKTEVMGASFRNIDEIKELAGCDLLTIAPKFLDELNREEGELIKKLDEDTQSQSSIDYKFDEKDFRLSMLEDQMASEKLSEGITGFSKAIEELEELLLKRLSEINNQKLISTT.

Lys135 (schiff-base intermediate with substrate) is an active-site residue.

It belongs to the transaldolase family. Type 1 subfamily. Homodimer.

It localises to the cytoplasm. The enzyme catalyses D-sedoheptulose 7-phosphate + D-glyceraldehyde 3-phosphate = D-erythrose 4-phosphate + beta-D-fructose 6-phosphate. Its pathway is carbohydrate degradation; pentose phosphate pathway; D-glyceraldehyde 3-phosphate and beta-D-fructose 6-phosphate from D-ribose 5-phosphate and D-xylulose 5-phosphate (non-oxidative stage): step 2/3. Functionally, transaldolase is important for the balance of metabolites in the pentose-phosphate pathway. This is Transaldolase from Prochlorococcus marinus subsp. pastoris (strain CCMP1986 / NIES-2087 / MED4).